A 377-amino-acid polypeptide reads, in one-letter code: Ipis-1 (377 aa).

Asn-11 and Asn-226 each carry an N-linked (GlcNAc...) asparagine glycan.

The protein belongs to the serpin family. In terms of tissue distribution, female salivary gland. Not detected in midgut and other tissues.

The protein resides in the secreted. In terms of biological role, salivary protein with immunosuppressive properties that can modulate blood feeding of ticks on vertebrate species. Inhibits proliferation of bovine peripheral blood mononuclear cells (PBMCs). Inhibits IFN-gamma (IFNG) production by bovine PBMCs. This chain is Ipis-1, found in Ixodes persulcatus (Taiga tick).